A 199-amino-acid polypeptide reads, in one-letter code: N-(5'-phosphoribosyl)anthranilate isomerase (199 aa).

Belongs to the TrpF family.

The enzyme catalyses N-(5-phospho-beta-D-ribosyl)anthranilate = 1-(2-carboxyphenylamino)-1-deoxy-D-ribulose 5-phosphate. It functions in the pathway amino-acid biosynthesis; L-tryptophan biosynthesis; L-tryptophan from chorismate: step 3/5. The polypeptide is N-(5'-phosphoribosyl)anthranilate isomerase (Solibacter usitatus (strain Ellin6076)).